Here is a 336-residue protein sequence, read N- to C-terminus: Syntaxin-31 (336 aa).

Residues 1-314 lie on the Cytoplasmic side of the membrane; it reads MGSTFRDRTV…QHLTRISSNR (314 aa). Disordered regions lie at residues 23–53 and 152–218; these read GAIP…KASR and RSEN…SQLR. Residues 154–163 show a composition bias toward basic and acidic residues; sequence ENMKAHENRK. Polar residues predominate over residues 164–181; that stretch reads QLFSTKNAVDSPPQNNAK. Positions 190–202 are enriched in low complexity; the sequence is SSSSNPFGNLQQP. A t-SNARE coiled-coil homology domain is found at 244 to 306; the sequence is ENYSQSRAVA…EGARSALLQH (63 aa). Residues 315 to 335 form a helical; Anchor for type IV membrane protein membrane-spanning segment; it reads WLMMKIFAVIILFLIVFLFFV. Residue A336 is a topological domain, vesicular.

It belongs to the syntaxin family. As to quaternary structure, part of the t-SNARE complex. Interacts with CDC48A, but not with VPS45.

It localises to the golgi apparatus. It is found in the cis-Golgi network membrane. Its subcellular location is the cytoplasm. The protein localises to the endosome. Vesicle trafficking protein that functions in the secretory pathway. The protein is Syntaxin-31 (SYP31) of Arabidopsis thaliana (Mouse-ear cress).